A 60-amino-acid polypeptide reads, in one-letter code: uncharacterized protein (60 aa).

This is an uncharacterized protein from Emericella nidulans (strain FGSC A4 / ATCC 38163 / CBS 112.46 / NRRL 194 / M139) (Aspergillus nidulans).